Reading from the N-terminus, the 338-residue chain is Fructose-1,6-bisphosphatase class 1 1 (338 aa).

Glutamate 94, aspartate 116, leucine 118, and aspartate 119 together coordinate Mg(2+). Substrate-binding positions include 119-122 (DGSS), asparagine 210, and lysine 276. Glutamate 282 contacts Mg(2+).

It belongs to the FBPase class 1 family. As to quaternary structure, homotetramer. The cofactor is Mg(2+).

The protein localises to the cytoplasm. It carries out the reaction beta-D-fructose 1,6-bisphosphate + H2O = beta-D-fructose 6-phosphate + phosphate. The protein operates within carbohydrate biosynthesis; gluconeogenesis. The protein is Fructose-1,6-bisphosphatase class 1 1 of Paraburkholderia phymatum (strain DSM 17167 / CIP 108236 / LMG 21445 / STM815) (Burkholderia phymatum).